We begin with the raw amino-acid sequence, 430 residues long: Gamma-glutamyl phosphate reductase (430 aa).

This sequence belongs to the gamma-glutamyl phosphate reductase family.

Its subcellular location is the cytoplasm. It carries out the reaction L-glutamate 5-semialdehyde + phosphate + NADP(+) = L-glutamyl 5-phosphate + NADPH + H(+). It functions in the pathway amino-acid biosynthesis; L-proline biosynthesis; L-glutamate 5-semialdehyde from L-glutamate: step 2/2. Functionally, catalyzes the NADPH-dependent reduction of L-glutamate 5-phosphate into L-glutamate 5-semialdehyde and phosphate. The product spontaneously undergoes cyclization to form 1-pyrroline-5-carboxylate. The protein is Gamma-glutamyl phosphate reductase of Psychrobacter arcticus (strain DSM 17307 / VKM B-2377 / 273-4).